Reading from the N-terminus, the 311-residue chain is p-hydroxybenzoic acid efflux pump subunit AaeA (311 aa).

Residues 11 to 31 traverse the membrane as a helical segment; the sequence is VGITVLVVVLAVIAIFNVWAF.

The protein belongs to the membrane fusion protein (MFP) (TC 8.A.1) family.

It localises to the cell inner membrane. Functionally, forms an efflux pump with AaeB. This chain is p-hydroxybenzoic acid efflux pump subunit AaeA, found in Yersinia pestis bv. Antiqua (strain Antiqua).